Here is a 362-residue protein sequence, read N- to C-terminus: Peptide chain release factor 1 (362 aa).

Gln-237 carries the post-translational modification N5-methylglutamine.

This sequence belongs to the prokaryotic/mitochondrial release factor family. Post-translationally, methylated by PrmC. Methylation increases the termination efficiency of RF1.

It is found in the cytoplasm. In terms of biological role, peptide chain release factor 1 directs the termination of translation in response to the peptide chain termination codons UAG and UAA. The chain is Peptide chain release factor 1 (prfA) from Aquifex aeolicus (strain VF5).